Reading from the N-terminus, the 198-residue chain is MFKVIHRYVGPASLSLLTFKVYASSKKDSPHKDTVKVNELSLYSVPEHQSKYVEEPRTQLEESISHLRHYCEPYTSWCQEKYSQNKPKIQSLVQWGLDSYEYLQNAPPGFFPRLGVIGFAGVVGLVLARGSKIKKLVYPPGFMGFAASLYYPQQAIVFVQVSGEKLYDWGLRGYIVVEDLWKENFQKSGNVKNSPGNK.

A signal peptide spans 1–25 (MFKVIHRYVGPASLSLLTFKVYASS). The chain crosses the membrane as a helical span at residues 108 to 128 (PGFFPRLGVIGFAGVVGLVLA). A glycan (O-linked (Xyl...) (chondroitin sulfate) serine) is linked at S162.

Belongs to the apolipoprotein O/MICOS complex subunit Mic27 family. Component of the mitochondrial contact site and cristae organizing system (MICOS) complex, composed of at least MICOS10/MIC10, CHCHD3/MIC19, CHCHD6/MIC25, APOOL/MIC27, IMMT/MIC60, APOO/MIC23/MIC26 and MICOS13/MIC13. This complex was also known under the names MINOS or MitOS complex. The MICOS complex associates with mitochondrial outer membrane proteins SAMM50, MTX1 and MTX2 (together described as components of the mitochondrial outer membrane sorting assembly machinery (SAM) complex) and DNAJC11, mitochondrial inner membrane protein TMEM11 and with HSPA9. The MICOS and SAM complexes together with DNAJC11 are part of a large protein complex spanning both membranes termed the mitochondrial intermembrane space bridging (MIB) complex. Interacts with IMMT/MIC60. Interacts with MICOS10/MIC10 and APOOL/MIC27. O-glycosylation; glycosaminoglycan of chondroitin-sulfate type.

The protein localises to the mitochondrion inner membrane. Its subcellular location is the secreted. It is found in the mitochondrion. The protein resides in the endoplasmic reticulum membrane. It localises to the golgi apparatus membrane. Functionally, component of the MICOS complex, a large protein complex of the mitochondrial inner membrane that plays crucial roles in the maintenance of crista junctions, inner membrane architecture, and formation of contact sites to the outer membrane. Plays a crucial role in crista junction formation and mitochondrial function. Can induce cardiac lipotoxicity by enhancing mitochondrial respiration and fatty acid metabolism in cardiac myoblasts. Promotes cholesterol efflux from macrophage cells. Detected in HDL, LDL and VLDL. Secreted by a microsomal triglyceride transfer protein (MTTP)-dependent mechanism, probably as a VLDL-associated protein that is subsequently transferred to HDL. The protein is MICOS complex subunit MIC26 (APOO) of Bos taurus (Bovine).